We begin with the raw amino-acid sequence, 343 residues long: L-ornithine/L-arginine 3-hydroxylase (343 aa).

Histidine 147 and glutamate 149 together coordinate Fe cation. A compositionally biased stretch (polar residues) spans 199–215; sequence MPDNSHLPQNTAESTGD. Residues 199–218 form a disordered region; the sequence is MPDNSHLPQNTAESTGDPTK. Histidine 302 is a binding site for Fe cation. 2-oxoglutarate is bound at residue arginine 316.

This sequence belongs to the clavaminate synthase family. Fe(2+) is required as a cofactor.

It carries out the reaction L-ornithine + 2-oxoglutarate + O2 = (3S)-3-hydroxy-L-ornithine + succinate + CO2. The enzyme catalyses L-arginine + 2-oxoglutarate + O2 = (2S,3S)-hydroxyarginine + succinate + CO2. Functionally, alpha-ketoglutarate-dependent dioxygenase that in vitro catalyzes the regio- and stereoselective hydroxylation of L-ornithine and L-arginine, leading to (3S)-3-hydroxy-L-ornithine and (3S)-3-hydroxy-L-arginine, respectively. Cannot use L-lysine, D-ornithine, or D-arginine as substrate. This chain is L-ornithine/L-arginine 3-hydroxylase, found in Catenulispora acidiphila (strain DSM 44928 / JCM 14897 / NBRC 102108 / NRRL B-24433 / ID139908).